A 147-amino-acid chain; its full sequence is NADPH-dependent 7-cyano-7-deazaguanine reductase (147 aa).

The tract at residues 1–23 is disordered; the sequence is MQTTHLGKNSPIPQSPEEASLDY. C46 (thioimide intermediate) is an active-site residue. D53 acts as the Proton donor in catalysis. Substrate contacts are provided by residues 68 to 70 and 87 to 88; these read VES and HE.

It belongs to the GTP cyclohydrolase I family. QueF type 1 subfamily.

The protein resides in the cytoplasm. The catalysed reaction is 7-aminomethyl-7-carbaguanine + 2 NADP(+) = 7-cyano-7-deazaguanine + 2 NADPH + 3 H(+). Its pathway is tRNA modification; tRNA-queuosine biosynthesis. Catalyzes the NADPH-dependent reduction of 7-cyano-7-deazaguanine (preQ0) to 7-aminomethyl-7-deazaguanine (preQ1). This is NADPH-dependent 7-cyano-7-deazaguanine reductase from Zymomonas mobilis subsp. mobilis (strain ATCC 31821 / ZM4 / CP4).